An 84-amino-acid chain; its full sequence is U8-theraphotoxin-Hhn1d (84 aa).

The signal sequence occupies residues M1–C21. Intrachain disulfides connect C23-C35, C29-C44, C34-C67, C54-C75, and C69-C81.

The protein belongs to the AVIT (prokineticin) family. Expressed by the venom gland.

The protein resides in the secreted. The sequence is that of U8-theraphotoxin-Hhn1d from Cyriopagopus hainanus (Chinese bird spider).